Reading from the N-terminus, the 361-residue chain is DNA replication and repair protein RecF (361 aa).

G30–T37 provides a ligand contact to ATP.

Belongs to the RecF family.

The protein localises to the cytoplasm. Its function is as follows. The RecF protein is involved in DNA metabolism; it is required for DNA replication and normal SOS inducibility. RecF binds preferentially to single-stranded, linear DNA. It also seems to bind ATP. The polypeptide is DNA replication and repair protein RecF (Streptococcus gordonii (strain Challis / ATCC 35105 / BCRC 15272 / CH1 / DL1 / V288)).